A 508-amino-acid polypeptide reads, in one-letter code: Photosystem II CP47 reaction center protein (508 aa).

The next 6 membrane-spanning stretches (helical) occupy residues 21–36 (SVHI…WAGS), 101–115 (IVFS…IWHW), 140–156 (GIHL…FGAF), 203–218 (IAAG…FHLS), 237–252 (VLSS…AFIV), and 457–472 (SFAL…HGAR).

It belongs to the PsbB/PsbC family. PsbB subfamily. PSII is composed of 1 copy each of membrane proteins PsbA, PsbB, PsbC, PsbD, PsbE, PsbF, PsbH, PsbI, PsbJ, PsbK, PsbL, PsbM, PsbT, PsbX, PsbY, PsbZ, Psb30/Ycf12, at least 3 peripheral proteins of the oxygen-evolving complex and a large number of cofactors. It forms dimeric complexes. Binds multiple chlorophylls. PSII binds additional chlorophylls, carotenoids and specific lipids. serves as cofactor.

It is found in the plastid. The protein localises to the chloroplast thylakoid membrane. One of the components of the core complex of photosystem II (PSII). It binds chlorophyll and helps catalyze the primary light-induced photochemical processes of PSII. PSII is a light-driven water:plastoquinone oxidoreductase, using light energy to abstract electrons from H(2)O, generating O(2) and a proton gradient subsequently used for ATP formation. This is Photosystem II CP47 reaction center protein from Amborella trichopoda.